A 101-amino-acid polypeptide reads, in one-letter code: Large ribosomal subunit protein uL23 (101 aa).

This sequence belongs to the universal ribosomal protein uL23 family. In terms of assembly, part of the 50S ribosomal subunit. Contacts protein L29, and trigger factor when it is bound to the ribosome.

One of the early assembly proteins it binds 23S rRNA. One of the proteins that surrounds the polypeptide exit tunnel on the outside of the ribosome. Forms the main docking site for trigger factor binding to the ribosome. The polypeptide is Large ribosomal subunit protein uL23 (Paenarthrobacter aurescens (strain TC1)).